Here is a 360-residue protein sequence, read N- to C-terminus: Vignain (360 aa).

A signal peptide spans Met1–Ser20. Positions Phe21–Asp124 are cleaved as a propeptide — activation peptide. The N-linked (GlcNAc...) asparagine glycan is linked to Asn115. 3 disulfides stabilise this stretch: Cys147/Cys189, Cys181/Cys222, and Cys280/Cys332. Cys150 is an active-site residue. Active-site residues include His286 and Asn307. The interval Pro341–Leu360 is disordered. Polar residues predominate over residues Lys344–Lys353. Positions Ser354–Leu360 are cleaved as a propeptide — removed in mature form. A prevents secretion from ER region spans residues Lys357–Leu360.

Belongs to the peptidase C1 family. Post-translationally, the potential N-glycosylation site at Asn-115 is not glycosylated.

The protein localises to the cytoplasmic vesicle. With respect to regulation, low pH triggers activation of the protease and removal of the propeptide and the KDEL motif. Involved in programmed cell death. Shows a pronounced preference for hydrophobic residues in the P2 position and no obvious preference in the P1 position of the cleavage site. Accepts proline at the P1 and P1' positions. This chain is Vignain (CYSEP), found in Ricinus communis (Castor bean).